A 372-amino-acid polypeptide reads, in one-letter code: General transcription factor IIH subunit 3 (372 aa).

Positions isoleucine 40–asparagine 78 are disordered. Residues serine 50–glycine 60 are compositionally biased toward polar residues. Positions asparagine 61–asparagine 78 are enriched in low complexity. A C4-type zinc finger spans residues cysteine 323–cysteine 340.

This sequence belongs to the TFB4 family. As to quaternary structure, component of the 7-subunit TFIIH core complex composed of XPB/repB, XPD/repD, gtf2h1, gtf2h2, gtf2h3, gtf2h4 and gtf2h5, which is active in NER. The core complex associates with the 3-subunit CDK-activating kinase (CAK) module composed of cycH/cyclin H, cdk7 and mnat1 to form the 10-subunit holoenzyme (holo-TFIIH) active in transcription.

The protein resides in the nucleus. Component of the general transcription and DNA repair factor IIH (TFIIH) core complex, which is involved in general and transcription-coupled nucleotide excision repair (NER) of damaged DNA and, when complexed to CAK, in RNA transcription by RNA polymerase II. In NER, TFIIH acts by opening DNA around the lesion to allow the excision of the damaged oligonucleotide and its replacement by a new DNA fragment. In transcription, TFIIH has an essential role in transcription initiation. When the pre-initiation complex (PIC) has been established, TFIIH is required for promoter opening and promoter escape. Phosphorylation of the C-terminal tail (CTD) of the largest subunit of RNA polymerase II by the kinase module CAK controls the initiation of transcription. The chain is General transcription factor IIH subunit 3 (gtf2h3) from Dictyostelium discoideum (Social amoeba).